A 556-amino-acid polypeptide reads, in one-letter code: Formate--tetrahydrofolate ligase (556 aa).

An ATP-binding site is contributed by 65–72; sequence TPAGEGKS.

The protein belongs to the formate--tetrahydrofolate ligase family.

It catalyses the reaction (6S)-5,6,7,8-tetrahydrofolate + formate + ATP = (6R)-10-formyltetrahydrofolate + ADP + phosphate. It participates in one-carbon metabolism; tetrahydrofolate interconversion. This Enterococcus faecalis (strain ATCC 700802 / V583) protein is Formate--tetrahydrofolate ligase.